The sequence spans 192 residues: Imidazoleglycerol-phosphate dehydratase (192 aa).

It belongs to the imidazoleglycerol-phosphate dehydratase family.

It localises to the cytoplasm. The enzyme catalyses D-erythro-1-(imidazol-4-yl)glycerol 3-phosphate = 3-(imidazol-4-yl)-2-oxopropyl phosphate + H2O. The protein operates within amino-acid biosynthesis; L-histidine biosynthesis; L-histidine from 5-phospho-alpha-D-ribose 1-diphosphate: step 6/9. This is Imidazoleglycerol-phosphate dehydratase from Staphylococcus aureus (strain JH9).